A 201-amino-acid polypeptide reads, in one-letter code: Endoribonuclease YbeY (201 aa).

Zn(2+) is bound by residues His156, His160, and His166.

It belongs to the endoribonuclease YbeY family. It depends on Zn(2+) as a cofactor.

Its subcellular location is the cytoplasm. In terms of biological role, single strand-specific metallo-endoribonuclease involved in late-stage 70S ribosome quality control and in maturation of the 3' terminus of the 16S rRNA. In Cupriavidus pinatubonensis (strain JMP 134 / LMG 1197) (Cupriavidus necator (strain JMP 134)), this protein is Endoribonuclease YbeY.